The primary structure comprises 553 residues: Solute carrier family 2, facilitated glucose transporter member 10 (553 aa).

Residues 1–15 are Cytoplasmic-facing; sequence MGLRSTTLVLAATSS. Residues 16–36 form a helical membrane-spanning segment; it reads LLGGLIFGYELGIISGALLML. Residues 37-48 lie on the Extracellular side of the membrane; the sequence is KTVFQLTCFEQE. Residues 49–69 traverse the membrane as a helical segment; sequence ALVSAVLFGALLASLIGGFII. The Cytoplasmic segment spans residues 70-82; sequence DRSGRRTSIMGSN. The chain crosses the membrane as a helical span at residues 83–103; it reads LVVLAGSIILIATSSFWWLVV. Topologically, residues 104-105 are extracellular; that stretch reads GR. A helical transmembrane segment spans residues 106–126; that stretch reads VTVGFAISISSMACCIYVSEI. Residues 127–132 lie on the Cytoplasmic side of the membrane; that stretch reads VRPHQR. Residues 133-153 form a helical membrane-spanning segment; that stretch reads GTLVSLYETGITVGILISYAM. Residues 154–165 lie on the Extracellular side of the membrane; the sequence is NYFLSAVNDGWK. Residues 166–186 traverse the membrane as a helical segment; the sequence is YMFGLAIIPAAFQFIVILFLP. Residues 187 to 240 are Cytoplasmic-facing; the sequence is SKPHTLNFWEQDSDNGFIELEEAGESGEFKPDTYDKQYTFLDLFRSKDNMRTRT. A helical membrane pass occupies residues 241–261; that stretch reads LLGLGLVLFQQFTGQPNVLYY. Residue 250–251 coordinates D-glucose; that stretch reads QQ. Residues 262–277 lie on the Extracellular side of the membrane; that stretch reads ASTIFRSVGFQSNSSA. N-linked (GlcNAc...) asparagine glycosylation occurs at N274. A helical membrane pass occupies residues 278–298; that stretch reads VLASVGLGVVKVASTLIAICF. Topologically, residues 299-305 are cytoplasmic; the sequence is ADKAGRR. The chain crosses the membrane as a helical span at residues 306–326; the sequence is ILLLAGCIVMTIAISGIGIVS. The Extracellular segment spans residues 327 to 413; that stretch reads FMVELDSHRD…PPAGPDSNYA (87 aa). N344, N351, and N400 each carry an N-linked (GlcNAc...) asparagine glycan. Residues 414–434 form a helical membrane-spanning segment; it reads ILNWITLLSMMAFVSAFSIGF. Topologically, residues 435 to 462 are cytoplasmic; sequence GPMTWLVLSEIYPADIRGRAFAFCNSFN. W439 contacts D-glucose. A helical membrane pass occupies residues 463–482; sequence WAANLLITLTFLEVIGSIGL. Position 483 (G483) is a topological domain, extracellular. The helical transmembrane segment at 484–504 threads the bilayer; it reads WTFLLYGGVGLLAIAFIYFFI. The Cytoplasmic portion of the chain corresponds to 505 to 553; it reads PETKGQSLEEIDQQLSSKRISKRRETSKGVRKRPSTGPPYQRVGKSNWT. The tract at residues 522–553 is disordered; sequence KRISKRRETSKGVRKRPSTGPPYQRVGKSNWT.

This sequence belongs to the major facilitator superfamily. Sugar transporter (TC 2.A.1.1) family. Glucose transporter subfamily.

It is found in the endomembrane system. Its subcellular location is the cytoplasm. The protein localises to the perinuclear region. It catalyses the reaction D-glucose(out) = D-glucose(in). Its function is as follows. Facilitative glucose transporter required for the development of the cardiovascular system. The chain is Solute carrier family 2, facilitated glucose transporter member 10 from Xenopus laevis (African clawed frog).